Consider the following 268-residue polypeptide: Small ribosomal subunit protein uS3 (268 aa).

The KH type-2 domain occupies 40–110; that stretch reads IRNLFFINYR…KLDLTINEIG (71 aa).

This sequence belongs to the universal ribosomal protein uS3 family. In terms of assembly, part of the 30S ribosomal subunit. Forms a tight complex with proteins S10 and S14.

Functionally, binds the lower part of the 30S subunit head. Binds mRNA in the 70S ribosome, positioning it for translation. The polypeptide is Small ribosomal subunit protein uS3 (Mycoplasma genitalium (strain ATCC 33530 / DSM 19775 / NCTC 10195 / G37) (Mycoplasmoides genitalium)).